The chain runs to 494 residues: UPF0371 protein spyM18_1356 (494 aa).

The protein belongs to the UPF0371 family.

This chain is UPF0371 protein spyM18_1356, found in Streptococcus pyogenes serotype M18 (strain MGAS8232).